The sequence spans 183 residues: Inner membrane protein p54 (183 aa).

Residues 32–52 (YTILIAIVVLVIIIIVLIYLF) traverse the membrane as a helical segment. Residues 81–157 (EVTPQPGTSK…PYTTVTTQNT (77 aa)) are disordered. The span at 111 to 122 (RPATNKPVTDNP) shows a compositional bias: polar residues. The span at 130–143 (ATGGPAAAPAAASA) shows a compositional bias: low complexity. An interaction with host DYNLL1 region spans residues 149 to 161 (YTTVTTQNTASQT).

This sequence belongs to the asfivirus envelope protein p54 family. As to quaternary structure, interacts with the host light chain cytoplasmic dynein DYNLL1; this interaction is critical for intracellular microtubule-dependent virus transport toward viral factories.

It localises to the virion membrane. It is found in the host cytoplasm. Its subcellular location is the host cytoskeleton. The protein localises to the host endoplasmic reticulum membrane. In terms of biological role, inner envelope protein involved, through its interaction with host dynein, in the intracellular microtubule-dependent transport of viral capsid toward viral factories. Seems to induce caspase-3 activation and apoptosis. Plays a role in virion morphogenesis by recruiting and transforming the host ER membranes into the precursors of the viral envelope. Involved in virus attachment to the host cell. This is Inner membrane protein p54 from African swine fever virus (strain Badajoz 1971 Vero-adapted) (Ba71V).